The sequence spans 278 residues: Tryptophan synthase alpha chain (278 aa).

Active-site proton acceptor residues include Glu-50 and Asp-61.

This sequence belongs to the TrpA family. Tetramer of two alpha and two beta chains.

The enzyme catalyses (1S,2R)-1-C-(indol-3-yl)glycerol 3-phosphate + L-serine = D-glyceraldehyde 3-phosphate + L-tryptophan + H2O. Its pathway is amino-acid biosynthesis; L-tryptophan biosynthesis; L-tryptophan from chorismate: step 5/5. The alpha subunit is responsible for the aldol cleavage of indoleglycerol phosphate to indole and glyceraldehyde 3-phosphate. The sequence is that of Tryptophan synthase alpha chain from Methylorubrum populi (strain ATCC BAA-705 / NCIMB 13946 / BJ001) (Methylobacterium populi).